Here is a 66-residue protein sequence, read N- to C-terminus: Large ribosomal subunit protein uL29 (66 aa).

The protein belongs to the universal ribosomal protein uL29 family.

The chain is Large ribosomal subunit protein uL29 from Rhizobium etli (strain ATCC 51251 / DSM 11541 / JCM 21823 / NBRC 15573 / CFN 42).